Consider the following 393-residue polypeptide: N-lysine methyltransferase KMT5A (393 aa).

The interval 68 to 88 is disordered; the sequence is PGPEMVERRGPGRPRTDGENV. Residues 72 to 85 are compositionally biased toward basic and acidic residues; sequence MVERRGPGRPRTDG. Ser100 carries the post-translational modification Phosphoserine. A coiled-coil region spans residues 134-163; sequence RKREEKRNAGNAVRSAMKSEEQKIKDARKG. Positions 135–241 are disordered; the sequence is KREEKRNAGN…SRKSKAELQS (107 aa). Over residues 150–162 the composition is skewed to basic and acidic residues; sequence MKSEEQKIKDARK. Lys162 carries the post-translational modification N6-acetyllysine. Phosphothreonine is present on Thr181. The span at 197-213 shows a compositional bias: basic residues; the sequence is ALKKPIKGKQAPRKKAQ. The region spanning 257–378 is the SET domain; that stretch reads EGMKIDLIDG…AGEELLYDYG (122 aa). S-adenosyl-L-methionine-binding positions include 267–269, Tyr312, and 339–340; these read KGR and NH.

This sequence belongs to the class V-like SAM-binding methyltransferase superfamily. Histone-lysine methyltransferase family. PR/SET subfamily. In terms of assembly, interacts with L3MBTL1. As to quaternary structure, interacts with SIRT2 (phosphorylated form); the interaction is direct, stimulates KMT5A-mediated methyltransferase activity at histone H4 'Lys-20' (H4K20me1) and is increased in a H(2)O(2)-induced oxidative stress-dependent manner. In terms of processing, acetylated at Lys-162; does not affect methyltransferase activity. Deacetylated at Lys-162 possibly by SIRT2; does not change methyltransferase activity. Post-translationally, ubiquitinated and degraded by the DCX(DTL) complex.

Its subcellular location is the nucleus. It localises to the chromosome. The enzyme catalyses L-lysyl(20)-[histone H4] + S-adenosyl-L-methionine = N(6)-methyl-L-lysyl(20)-[histone H4] + S-adenosyl-L-homocysteine + H(+). It catalyses the reaction L-lysyl-[protein] + S-adenosyl-L-methionine = N(6)-methyl-L-lysyl-[protein] + S-adenosyl-L-homocysteine + H(+). In terms of biological role, protein-lysine N-methyltransferase that monomethylates both histones and non-histone proteins. Specifically monomethylates 'Lys-20' of histone H4 (H4K20me1). H4K20me1 is enriched during mitosis and represents a specific tag for epigenetic transcriptional repression. Mainly functions in euchromatin regions, thereby playing a central role in the silencing of euchromatic genes. Required for cell proliferation, probably by contributing to the maintenance of proper higher-order structure of DNA during mitosis. Involved in chromosome condensation and proper cytokinesis. Nucleosomes are preferred as substrate compared to free histones. Mediates monomethylation of p53/TP53 at 'Lys-382', leading to repress p53/TP53-target genes. Plays a negative role in TGF-beta response regulation and a positive role in cell migration. The protein is N-lysine methyltransferase KMT5A of Homo sapiens (Human).